A 257-amino-acid polypeptide reads, in one-letter code: Diphthine synthase (257 aa).

S-adenosyl-L-methionine-binding positions include isoleucine 11, aspartate 89, isoleucine 92, 117–118 (SV), leucine 169, leucine 210, and histidine 235.

The protein belongs to the diphthine synthase family. Homodimer.

The enzyme catalyses 2-[(3S)-amino-3-carboxypropyl]-L-histidyl-[translation elongation factor 2] + 3 S-adenosyl-L-methionine = diphthine-[translation elongation factor 2] + 3 S-adenosyl-L-homocysteine + 3 H(+). Its pathway is protein modification; peptidyl-diphthamide biosynthesis. Its function is as follows. S-adenosyl-L-methionine-dependent methyltransferase that catalyzes the trimethylation of the amino group of the modified target histidine residue in translation elongation factor 2 (EF-2), to form an intermediate called diphthine. The three successive methylation reactions represent the second step of diphthamide biosynthesis. The protein is Diphthine synthase of Saccharolobus solfataricus (strain ATCC 35092 / DSM 1617 / JCM 11322 / P2) (Sulfolobus solfataricus).